A 356-amino-acid polypeptide reads, in one-letter code: Holliday junction branch migration complex subunit RuvB (356 aa).

The segment at 13-201 is large ATPase domain (RuvB-L); that stretch reads SSNLSRKTRL…FGITQRLNFY (189 aa). The interval 15 to 35 is disordered; sequence NLSRKTRLLDPTPSLEEGKVR. ATP is bound by residues Leu40, Arg41, Gly82, Lys85, Thr86, Thr87, 148-150, Arg191, Tyr201, and Arg238; that span reads EDF. Thr86 lines the Mg(2+) pocket. The interval 202–273 is small ATPAse domain (RuvB-S); the sequence is SISDLNRIIQ…LVDKSLTLHQ (72 aa). The head domain (RuvB-H) stretch occupies residues 276–356; the sequence is ECGLDQSDRR…NSCKNSPIIK (81 aa). The DNA site is built by Arg331 and Arg336.

Belongs to the RuvB family. In terms of assembly, homohexamer. Forms an RuvA(8)-RuvB(12)-Holliday junction (HJ) complex. HJ DNA is sandwiched between 2 RuvA tetramers; dsDNA enters through RuvA and exits via RuvB. An RuvB hexamer assembles on each DNA strand where it exits the tetramer. Each RuvB hexamer is contacted by two RuvA subunits (via domain III) on 2 adjacent RuvB subunits; this complex drives branch migration. In the full resolvosome a probable DNA-RuvA(4)-RuvB(12)-RuvC(2) complex forms which resolves the HJ.

It is found in the cytoplasm. It carries out the reaction ATP + H2O = ADP + phosphate + H(+). The RuvA-RuvB-RuvC complex processes Holliday junction (HJ) DNA during genetic recombination and DNA repair, while the RuvA-RuvB complex plays an important role in the rescue of blocked DNA replication forks via replication fork reversal (RFR). RuvA specifically binds to HJ cruciform DNA, conferring on it an open structure. The RuvB hexamer acts as an ATP-dependent pump, pulling dsDNA into and through the RuvAB complex. RuvB forms 2 homohexamers on either side of HJ DNA bound by 1 or 2 RuvA tetramers; 4 subunits per hexamer contact DNA at a time. Coordinated motions by a converter formed by DNA-disengaged RuvB subunits stimulates ATP hydrolysis and nucleotide exchange. Immobilization of the converter enables RuvB to convert the ATP-contained energy into a lever motion, pulling 2 nucleotides of DNA out of the RuvA tetramer per ATP hydrolyzed, thus driving DNA branch migration. The RuvB motors rotate together with the DNA substrate, which together with the progressing nucleotide cycle form the mechanistic basis for DNA recombination by continuous HJ branch migration. Branch migration allows RuvC to scan DNA until it finds its consensus sequence, where it cleaves and resolves cruciform DNA. The chain is Holliday junction branch migration complex subunit RuvB from Prochlorococcus marinus (strain SARG / CCMP1375 / SS120).